The chain runs to 277 residues: MGQKINPFGYRLGITESHRSKWFSDSNKVGERYRDFVLEDDAIRKVMNKDLERAGVSRIIIERTRDRVRVDIHTARPGIVIGRRGAEAERVRAKLEKLTGKQVQLNIFEVKNPAIDAQLVAQGIAEQLTNRVTFRRAMRKAQQDAMRAGAKGIRIKLSGRLGGAEMSRSEFYREGRVPLQTLRALIDYGFFEAKTTYGRIGVKVWIYKGDMTEREFEEQQAQQGNNRPGRRGGDRRPRRGQRAGQRPTGQNQVKTGPDQQMEAEVSKEAAVEPETKE.

The 69-residue stretch at 43–111 folds into the KH type-2 domain; it reads IRKVMNKDLE…QVQLNIFEVK (69 aa). The interval 216 to 277 is disordered; the sequence is FEEQQAQQGN…EAAVEPETKE (62 aa). Basic and acidic residues predominate over residues 264–277; sequence EVSKEAAVEPETKE.

The protein belongs to the universal ribosomal protein uS3 family. In terms of assembly, part of the 30S ribosomal subunit. Forms a tight complex with proteins S10 and S14.

Binds the lower part of the 30S subunit head. Binds mRNA in the 70S ribosome, positioning it for translation. This is Small ribosomal subunit protein uS3 from Bifidobacterium animalis subsp. lactis (strain AD011).